We begin with the raw amino-acid sequence, 294 residues long: Probable 2-(5''-triphosphoribosyl)-3'-dephosphocoenzyme-A synthase (294 aa).

The protein belongs to the CitG/MdcB family.

It catalyses the reaction 3'-dephospho-CoA + ATP = 2'-(5''-triphospho-alpha-D-ribosyl)-3'-dephospho-CoA + adenine. The chain is Probable 2-(5''-triphosphoribosyl)-3'-dephosphocoenzyme-A synthase from Streptococcus pyogenes serotype M3 (strain ATCC BAA-595 / MGAS315).